We begin with the raw amino-acid sequence, 171 residues long: Large ribosomal subunit protein uL10 (171 aa).

The protein belongs to the universal ribosomal protein uL10 family. In terms of assembly, part of the ribosomal stalk of the 50S ribosomal subunit. The N-terminus interacts with L11 and the large rRNA to form the base of the stalk. The C-terminus forms an elongated spine to which L12 dimers bind in a sequential fashion forming a multimeric L10(L12)X complex.

In terms of biological role, forms part of the ribosomal stalk, playing a central role in the interaction of the ribosome with GTP-bound translation factors. This chain is Large ribosomal subunit protein uL10, found in Corynebacterium efficiens (strain DSM 44549 / YS-314 / AJ 12310 / JCM 11189 / NBRC 100395).